Reading from the N-terminus, the 742-residue chain is Envelope glycoprotein H (742 aa).

The signal sequence occupies residues 1–29 (MRPGLPSYLIVLAVCLLSHLLSSRYGAEA). Over 30 to 719 (ISEPLDKAFH…VVDATDSRLL (690 aa)) the chain is Virion surface. N-linked (GlcNAc...) asparagine; by host glycosylation is found at Asn55, Asn62, Asn67, and Asn192. Residues 217–280 (YLIDELRYVK…QTEKHELLVL (64 aa)) are interaction with gL. Residues Asn641 and Asn700 are each glycosylated (N-linked (GlcNAc...) asparagine; by host). Residues 720–740 (MMSVYALSAIIGIYLLYRMLK) form a helical membrane-spanning segment. The Intravirion portion of the chain corresponds to 741-742 (TC).

The protein belongs to the herpesviridae glycoprotein H family. Interacts with glycoprotein L (gL); this interaction is necessary for the correct processing and cell surface expression of gH. The heterodimer gH/gL seems to interact with gB trimers during fusion. Forms the envelope pentamer complex (PC) composed of gH, gL, UL128, UL130, and UL131A. The pentamer interacts with host NRP2. Forms the envelope trimer complex composed of gH, gL, and gO. The trimer interacts with host PDGFRA. The trimer also interacts with host EPHA2. Post-translationally, N-glycosylated, O-glycosylated, and sialylated.

It is found in the virion membrane. It localises to the host cell membrane. The protein localises to the host endosome membrane. The heterodimer glycoprotein H-glycoprotein L is required for the fusion of viral and plasma membranes leading to virus entry into the host cell. Following initial binding to host receptor, membrane fusion is mediated by the fusion machinery composed of gB and the heterodimer gH/gL. May also be involved in the fusion between the virion envelope and the outer nuclear membrane during virion morphogenesis. In human cytomegalovirus, forms two distincts complexes to mediate viral entry, a trimer and a pentamer at the surface of the virion envelope. The gH-gL-gO trimer is required for infection in fibroblasts by interacting with host PDGFRA, and in glioblastoma cells by interacting with host EPHA2. The gH-gL-UL128-UL130-UL131A pentamer is essential for viral entry in epithelial, endothelial and myeloid cells via interaction with host NRP2. In Human cytomegalovirus (strain Towne) (HHV-5), this protein is Envelope glycoprotein H.